We begin with the raw amino-acid sequence, 432 residues long: G-protein coupled receptor 22 (432 aa).

Topologically, residues 1-45 (MCFSPVLEINMQSESNVTVRDDIDDIDTNMYQPLSYPLSFQVSLT) are extracellular. N16 carries N-linked (GlcNAc...) asparagine glycosylation. A helical transmembrane segment spans residues 46–66 (GFLMLEIVLGLGSNLTVLVLY). At 67–85 (CMKSNLINSVSNIITMNLH) the chain is on the cytoplasmic side. Residues 86 to 106 (VLDVIICVGCIPLTIVILLLS) traverse the membrane as a helical segment. Residues 107-115 (LESNTALIC) are Extracellular-facing. The helical transmembrane segment at 116 to 136 (CFHEACVSFASVSTAINVFAI) threads the bilayer. Over 137-156 (TLDRYDISVKPANRILTMGR) the chain is Cytoplasmic. The chain crosses the membrane as a helical span at residues 157–177 (AVMLMTSIWIFSFFSFLIPFI). Residues 178 to 208 (EVNFFSLQSGNTWANKTLLCVSTSEYYTELG) lie on the Extracellular side of the membrane. N-linked (GlcNAc...) asparagine glycosylation occurs at N192. A helical transmembrane segment spans residues 209–229 (MYYHLLVQIPIFFFTVIVMLI). Residues 230–314 (TYTKILQALN…ERQKRVFKMS (85 aa)) are Cytoplasmic-facing. A helical membrane pass occupies residues 315–335 (LLIISTFLLCWTPISVLNTTI). The Extracellular portion of the chain corresponds to 336 to 348 (LCLGPSDLLVKLR). Residues 349–369 (LCFLVMAYGTTIFHPLLYAFT) traverse the membrane as a helical segment. At 370-432 (RQKFQKVLKS…KCLVPQVVTD (63 aa)) the chain is on the cytoplasmic side.

The protein belongs to the G-protein coupled receptor 1 family. In terms of tissue distribution, abundant levels detected in the brain and heart and no detectable expression in other peripheral tissues.

The protein localises to the cell membrane. Orphan G-protein coupled receptor. Seems to act through a G(i)/G(o) mediated pathway. May be involved in ciliogenesis. This Mus musculus (Mouse) protein is G-protein coupled receptor 22 (Gpr22).